Reading from the N-terminus, the 225-residue chain is NAD(P)H-quinone oxidoreductase subunit K, chloroplastic (225 aa).

Positions 43, 44, 108, and 139 each coordinate [4Fe-4S] cluster.

The protein belongs to the complex I 20 kDa subunit family. As to quaternary structure, NDH is composed of at least 16 different subunits, 5 of which are encoded in the nucleus. The cofactor is [4Fe-4S] cluster.

The protein resides in the plastid. It localises to the chloroplast thylakoid membrane. The catalysed reaction is a plastoquinone + NADH + (n+1) H(+)(in) = a plastoquinol + NAD(+) + n H(+)(out). It carries out the reaction a plastoquinone + NADPH + (n+1) H(+)(in) = a plastoquinol + NADP(+) + n H(+)(out). In terms of biological role, NDH shuttles electrons from NAD(P)H:plastoquinone, via FMN and iron-sulfur (Fe-S) centers, to quinones in the photosynthetic chain and possibly in a chloroplast respiratory chain. The immediate electron acceptor for the enzyme in this species is believed to be plastoquinone. Couples the redox reaction to proton translocation, and thus conserves the redox energy in a proton gradient. This Lemna minor (Common duckweed) protein is NAD(P)H-quinone oxidoreductase subunit K, chloroplastic.